We begin with the raw amino-acid sequence, 85 residues long: MDEIESSAVNAAASELRSIIERVERLEEEKAAIANDVKDVLGEAKGRGYDTKAIKTIIRLRKKDANERLEEETILQTYMAALGME.

The protein belongs to the UPF0335 family.

In Brucella anthropi (strain ATCC 49188 / DSM 6882 / CCUG 24695 / JCM 21032 / LMG 3331 / NBRC 15819 / NCTC 12168 / Alc 37) (Ochrobactrum anthropi), this protein is UPF0335 protein Oant_1161.